We begin with the raw amino-acid sequence, 226 residues long: Putative 5'-nucleotidase alr3139 (226 aa).

4 residues coordinate a divalent metal cation: D8, D9, S38, and N89.

This sequence belongs to the SurE nucleotidase family. A divalent metal cation serves as cofactor.

It is found in the cytoplasm. It carries out the reaction a ribonucleoside 5'-phosphate + H2O = a ribonucleoside + phosphate. Nucleotidase that shows phosphatase activity on nucleoside 5'-monophosphates. The chain is Putative 5'-nucleotidase alr3139 from Nostoc sp. (strain PCC 7120 / SAG 25.82 / UTEX 2576).